The following is a 257-amino-acid chain: Cilia- and flagella-associated protein 300 (257 aa).

The protein belongs to the CFAP300 family.

The protein resides in the cytoplasm. It is found in the cytoskeleton. It localises to the flagellum axoneme. Functionally, cilium- and flagellum-specific protein that plays a role in axonemal structure organization and motility. Plays a role in outer and inner dynein arm assembly. In Chlamydomonas reinhardtii (Chlamydomonas smithii), this protein is Cilia- and flagella-associated protein 300.